Consider the following 399-residue polypeptide: uncharacterized protein (399 aa).

The tract at residues alanine 375–arginine 399 is disordered.

Belongs to the mycobacterial PPE family.

This is an uncharacterized protein from Mycobacterium tuberculosis (strain ATCC 25618 / H37Rv).